We begin with the raw amino-acid sequence, 117 residues long: Phosphoribosyl-ATP pyrophosphatase (117 aa).

This sequence belongs to the PRA-PH family.

It localises to the cytoplasm. The catalysed reaction is 1-(5-phospho-beta-D-ribosyl)-ATP + H2O = 1-(5-phospho-beta-D-ribosyl)-5'-AMP + diphosphate + H(+). It participates in amino-acid biosynthesis; L-histidine biosynthesis; L-histidine from 5-phospho-alpha-D-ribose 1-diphosphate: step 2/9. The chain is Phosphoribosyl-ATP pyrophosphatase from Rhodospirillum rubrum (strain ATCC 11170 / ATH 1.1.1 / DSM 467 / LMG 4362 / NCIMB 8255 / S1).